The following is a 181-amino-acid chain: Oligoribonuclease (181 aa).

Positions 8–171 (LIWIDLEMTG…DDIRESVAEL (164 aa)) constitute an Exonuclease domain. Tyrosine 129 is an active-site residue.

It belongs to the oligoribonuclease family.

It is found in the cytoplasm. Functionally, 3'-to-5' exoribonuclease specific for small oligoribonucleotides. The chain is Oligoribonuclease from Sodalis glossinidius (strain morsitans).